Here is a 107-residue protein sequence, read N- to C-terminus: Iron-sulfur cluster assembly protein CyaY (107 aa).

This sequence belongs to the frataxin family.

Its function is as follows. Involved in iron-sulfur (Fe-S) cluster assembly. May act as a regulator of Fe-S biogenesis. The chain is Iron-sulfur cluster assembly protein CyaY from Yersinia intermedia.